Here is a 460-residue protein sequence, read N- to C-terminus: MLO-like protein 9 (460 aa).

Over 1–21 (MAGGGGGGGGEGPRQLDQTPT) the chain is Extracellular. A helical membrane pass occupies residues 22-42 (WAVSTVCGVIILISIILELII). Over 43 to 67 (HKVGEVFERKKKKALFEALEKIKNE) the chain is Cytoplasmic. A helical membrane pass occupies residues 68–88 (LMVLGFISLLLTFGQNYIASI). The Extracellular segment spans residues 89-158 (CVPSRYGHAM…ISLNALHQVH (70 aa)). A helical transmembrane segment spans residues 159 to 179 (IFIFFLAVFHVIYSAITMMLG). Over 180–289 (RAKIRGWKVW…KVVVGIRPEL (110 aa)) the chain is Cytoplasmic. The chain crosses the membrane as a helical span at residues 290–310 (WAFVMLFLLFDVHGWYVTAVI). Residues 311 to 315 (TMIPP) lie on the Extracellular side of the membrane. The helical transmembrane segment at 316–336 (LLTLAIGTKLQAIISYMALEI) threads the bilayer. Topologically, residues 337-366 (QERHAVIQGMPVVNVSDQHFWFEKPDLVLH) are cytoplasmic. The helical transmembrane segment at 367–387 (MIHFVLFQNAFEITYFFWIWY) threads the bilayer. Residues 388-398 (EFGLRSCFHHH) are Extracellular-facing. A helical transmembrane segment spans residues 399–419 (FGLIIIRVCLGVGVQFLCSYI). Residues 420 to 460 (TLPLYALVTQMGSTMKRSVFDEQTSKALEQWHKKARKKNEK) are Cytoplasmic-facing. The calmodulin-binding stretch occupies residues 441–460 (EQTSKALEQWHKKARKKNEK).

Belongs to the MLO family.

Its subcellular location is the membrane. May be involved in modulation of pathogen defense and leaf cell death. Activity seems to be regulated by Ca(2+)-dependent calmodulin binding and seems not to require heterotrimeric G proteins. This is MLO-like protein 9 (MLO9) from Arabidopsis thaliana (Mouse-ear cress).